A 546-amino-acid chain; its full sequence is Probable protein kinase UbiB (546 aa).

In terms of domain architecture, Protein kinase spans 124-502 (DFEIKPLASA…HVRQGQSRYF (379 aa)). ATP-binding positions include 130–138 (LASASIAQV) and K153. Residue D288 is the Proton acceptor of the active site. The next 2 membrane-spanning stretches (helical) occupy residues 501-521 (YFLGIGATLVLSGTFLLVSRP) and 522-542 (EWGLMPGWLMAGGLIAWFVGW).

The protein belongs to the ABC1 family. UbiB subfamily.

Its subcellular location is the cell inner membrane. It participates in cofactor biosynthesis; ubiquinone biosynthesis [regulation]. Is probably a protein kinase regulator of UbiI activity which is involved in aerobic coenzyme Q (ubiquinone) biosynthesis. The chain is Probable protein kinase UbiB from Escherichia coli O127:H6 (strain E2348/69 / EPEC).